The chain runs to 132 residues: Small ribosomal subunit protein uS11 (132 aa).

It belongs to the universal ribosomal protein uS11 family. As to quaternary structure, part of the 30S ribosomal subunit. Interacts with proteins S7 and S18. Binds to IF-3.

Its function is as follows. Located on the platform of the 30S subunit, it bridges several disparate RNA helices of the 16S rRNA. Forms part of the Shine-Dalgarno cleft in the 70S ribosome. The polypeptide is Small ribosomal subunit protein uS11 (Leifsonia xyli subsp. xyli (strain CTCB07)).